We begin with the raw amino-acid sequence, 329 residues long: Quinone oxidoreductase (329 aa).

An N-acetylalanine modification is found at Ala-2. Lys-23 bears the N6-acetyllysine mark. NADP(+) contacts are provided by residues Tyr-53, 158 to 161 (SGGV), Gly-181, His-200, Asn-229, 246 to 249 (VGSR), and 269 to 271 (VTL). Ser-248 carries the phosphoserine modification. An N6-succinyllysine modification is found at Lys-296.

It belongs to the zinc-containing alcohol dehydrogenase family. Quinone oxidoreductase subfamily. Homotetramer. In terms of tissue distribution, only very low amounts in the lens.

It is found in the cytoplasm. It carries out the reaction 2 a quinone + NADPH + H(+) = 2 a 1,4-benzosemiquinone + NADP(+). In terms of biological role, does not have alcohol dehydrogenase activity. Binds NADP and acts through a one-electron transfer process. Orthoquinones, such as 1,2-naphthoquinone or 9,10-phenanthrenequinone, are the best substrates (in vitro). May act in the detoxification of xenobiotics. Interacts with (AU)-rich elements (ARE) in the 3'-UTR of target mRNA species. Enhances the stability of mRNA coding for BCL2. NADPH binding interferes with mRNA binding. The protein is Quinone oxidoreductase (CRYZ) of Homo sapiens (Human).